The following is a 134-amino-acid chain: Small ribosomal subunit protein uS8c (134 aa).

This sequence belongs to the universal ribosomal protein uS8 family. As to quaternary structure, part of the 30S ribosomal subunit.

It localises to the plastid. Its subcellular location is the chloroplast. Its function is as follows. One of the primary rRNA binding proteins, it binds directly to 16S rRNA central domain where it helps coordinate assembly of the platform of the 30S subunit. The protein is Small ribosomal subunit protein uS8c (rps8) of Vitis vinifera (Grape).